Here is a 125-residue protein sequence, read N- to C-terminus: Oxytocin-neurophysin 1 (125 aa).

Positions 1–19 are cleaved as a signal peptide; it reads MAGPSLACCLLGLLALTSA. Cysteines 20 and 25 form a disulfide. G28 bears the Glycine amide mark. Intrachain disulfides connect C41–C85, C44–C58, C52–C75, C59–C65, C92–C104, C98–C116, and C105–C110.

It belongs to the vasopressin/oxytocin family. Interacts with oxytocin receptor (Ki=1.5 nM). Interacts with vasopressin V1aR/AVPR1A (Ki=37 nM), V1bR/AVPR1B (Ki=222 nM) and V2R/AVPR2 receptors (Ki=823 nM).

Its subcellular location is the secreted. Its function is as follows. Neurophysin 1 specifically binds oxytocin. Functionally, oxytocin causes contraction of the smooth muscle of the uterus and of the mammary gland. Acts by binding to oxytocin receptor (OXTR). The polypeptide is Oxytocin-neurophysin 1 (OXT) (Homo sapiens (Human)).